A 382-amino-acid polypeptide reads, in one-letter code: MQDAAPRLTFTLRDEERLMMKIGVFVPIGNNGWLISTHAPQYMPTFELNKAIVQKAEHYHFDFALSMIKLRGFGGKTEFWDHNLESFTLMAGLAAVTSRIQIYATAATLTLPPAIVARMAATIDSISGGRFGVNLVTGWQKPEYEQMGIWPGDDYFSRRYDYLTEYVQVLRDLWGSGKSDFKGDFFTMDDCRVSPQPSVPMKVICAGQSDAGMAFSARYADFNFCFGKGVNTPTAFAPTAARMKQAAEQTGRDVGSYVLFMVIADETDDAARAKWEHYKAGADEEALSWLTEQSQKDTRSGTDTNVRQMADPTSAVNINMGTLVGSYASVARMLDEVANVPGAEGVLLTFDDFLSGIETFGERIQPLMQCRAHLPALTQEVA.

FMN is bound by residues 68-69 (IK), Asn-134, Glu-143, 159-160 (RY), and Ser-209.

The protein belongs to the NtaA/SnaA/DszA monooxygenase family. RutA subfamily.

It catalyses the reaction uracil + FMNH2 + NADH + O2 = (Z)-3-ureidoacrylate + FMN + NAD(+) + H2O + H(+). The catalysed reaction is thymine + FMNH2 + NADH + O2 = (Z)-2-methylureidoacrylate + FMN + NAD(+) + H2O + H(+). Functionally, catalyzes the pyrimidine ring opening between N-3 and C-4 by an unusual flavin hydroperoxide-catalyzed mechanism, adding oxygen atoms in the process to yield ureidoacrylate peracid, that immediately reacts with FMN forming ureidoacrylate and FMN-N(5)-oxide. The FMN-N(5)-oxide reacts spontaneously with NADH to produce FMN. Requires the flavin reductase RutF to regenerate FMN in vivo. The sequence is that of Pyrimidine monooxygenase RutA from Escherichia coli O150:H5 (strain SE15).